The sequence spans 507 residues: tRNA(Ile)-lysidine synthase (507 aa).

24–29 (SGGGDS) provides a ligand contact to ATP. Residues 370 to 500 (PPEEAHMAEA…KLLRDFFARL (131 aa)) enclose the CMP/dCMP-type deaminase domain. Residues histidine 420, cysteine 445, and cysteine 448 each contribute to the Zn(2+) site.

It belongs to the tRNA(Ile)-lysidine synthase family.

It is found in the cytoplasm. It carries out the reaction cytidine(34) in tRNA(Ile2) + L-lysine + ATP = lysidine(34) in tRNA(Ile2) + AMP + diphosphate + H(+). In terms of biological role, ligates lysine onto the cytidine present at position 34 of the AUA codon-specific tRNA(Ile) that contains the anticodon CAU, in an ATP-dependent manner. Cytidine is converted to lysidine, thus changing the amino acid specificity of the tRNA from methionine to isoleucine. In Thermus thermophilus (strain ATCC 27634 / DSM 579 / HB8), this protein is tRNA(Ile)-lysidine synthase (tilS).